The sequence spans 103 residues: Large ribosomal subunit protein bL21 (103 aa).

This sequence belongs to the bacterial ribosomal protein bL21 family. In terms of assembly, part of the 50S ribosomal subunit. Contacts protein L20.

Functionally, this protein binds to 23S rRNA in the presence of protein L20. This chain is Large ribosomal subunit protein bL21, found in Clostridium beijerinckii (strain ATCC 51743 / NCIMB 8052) (Clostridium acetobutylicum).